Here is an 851-residue protein sequence, read N- to C-terminus: Protein translocase subunit SecA (851 aa).

Residues Gln-88, 106-110 (GEGKT), and Asp-496 each bind ATP. Zn(2+)-binding residues include Cys-828, Cys-830, Cys-839, and His-840.

Belongs to the SecA family. As to quaternary structure, monomer and homodimer. Part of the essential Sec protein translocation apparatus which comprises SecA, SecYEG and auxiliary proteins SecDF-YajC and YidC. Zn(2+) is required as a cofactor.

It is found in the cell inner membrane. It localises to the cytoplasm. It catalyses the reaction ATP + H2O + cellular proteinSide 1 = ADP + phosphate + cellular proteinSide 2.. Part of the Sec protein translocase complex. Interacts with the SecYEG preprotein conducting channel. Has a central role in coupling the hydrolysis of ATP to the transfer of proteins into and across the cell membrane, serving as an ATP-driven molecular motor driving the stepwise translocation of polypeptide chains across the membrane. The chain is Protein translocase subunit SecA from Helicobacter hepaticus (strain ATCC 51449 / 3B1).